The following is a 312-amino-acid chain: Ribosomal RNA small subunit methyltransferase H (312 aa).

S-adenosyl-L-methionine contacts are provided by residues 33–35 (AGH), Asp52, Phe79, Asp100, and Gln107.

It belongs to the methyltransferase superfamily. RsmH family.

It is found in the cytoplasm. The enzyme catalyses cytidine(1402) in 16S rRNA + S-adenosyl-L-methionine = N(4)-methylcytidine(1402) in 16S rRNA + S-adenosyl-L-homocysteine + H(+). Its function is as follows. Specifically methylates the N4 position of cytidine in position 1402 (C1402) of 16S rRNA. In Finegoldia magna (strain ATCC 29328 / DSM 20472 / WAL 2508) (Peptostreptococcus magnus), this protein is Ribosomal RNA small subunit methyltransferase H.